The sequence spans 206 residues: Imidazoleglycerol-phosphate dehydratase (206 aa).

The protein belongs to the imidazoleglycerol-phosphate dehydratase family.

It is found in the cytoplasm. It catalyses the reaction D-erythro-1-(imidazol-4-yl)glycerol 3-phosphate = 3-(imidazol-4-yl)-2-oxopropyl phosphate + H2O. The protein operates within amino-acid biosynthesis; L-histidine biosynthesis; L-histidine from 5-phospho-alpha-D-ribose 1-diphosphate: step 6/9. This chain is Imidazoleglycerol-phosphate dehydratase, found in Synechococcus sp. (strain JA-3-3Ab) (Cyanobacteria bacterium Yellowstone A-Prime).